The sequence spans 172 residues: C-phycocyanin beta chain (172 aa).

N4-methylasparagine is present on Asn72. Positions 82 and 153 each coordinate (2R,3E)-phycocyanobilin.

This sequence belongs to the phycobiliprotein family. In terms of assembly, heterodimer of an alpha and a beta subunit, which further assembles into trimers and the trimers into hexamers. The basic functional unit of phycobiliproteins is a ring-shaped hexamer formed from two back-to-back trimers contacting via the alpha chain subunits. The trimers are composed of alpha/beta subunit heterodimers arranged around a three-fold axis of symmetry. The phycoerythrins also contain a gamma subunit which is located in the center of the hexamer. In terms of processing, contains two covalently linked bilin chromophores.

It localises to the plastid. The protein resides in the chloroplast thylakoid membrane. Functionally, light-harvesting photosynthetic bile pigment-protein from the phycobiliprotein complex (phycobilisome, PBS). Phycocyanin is the major phycobiliprotein in the PBS rod. The sequence is that of C-phycocyanin beta chain (cpcB) from Rhodella violacea (Red alga).